The chain runs to 257 residues: Thiazole synthase (257 aa).

Residue lysine 96 is the Schiff-base intermediate with DXP of the active site. 1-deoxy-D-xylulose 5-phosphate is bound by residues glycine 157, 184–185 (AG), and 206–207 (NT).

Belongs to the ThiG family. Homotetramer. Forms heterodimers with either ThiH or ThiS.

It localises to the cytoplasm. It carries out the reaction [ThiS sulfur-carrier protein]-C-terminal-Gly-aminoethanethioate + 2-iminoacetate + 1-deoxy-D-xylulose 5-phosphate = [ThiS sulfur-carrier protein]-C-terminal Gly-Gly + 2-[(2R,5Z)-2-carboxy-4-methylthiazol-5(2H)-ylidene]ethyl phosphate + 2 H2O + H(+). Its pathway is cofactor biosynthesis; thiamine diphosphate biosynthesis. Functionally, catalyzes the rearrangement of 1-deoxy-D-xylulose 5-phosphate (DXP) to produce the thiazole phosphate moiety of thiamine. Sulfur is provided by the thiocarboxylate moiety of the carrier protein ThiS. In vitro, sulfur can be provided by H(2)S. This Rhizobium etli (strain ATCC 51251 / DSM 11541 / JCM 21823 / NBRC 15573 / CFN 42) protein is Thiazole synthase.